Reading from the N-terminus, the 282-residue chain is Caspase-3 (282 aa).

Residues H131 and C174 contribute to the active site.

This sequence belongs to the peptidase C14A family. In terms of assembly, heterotetramer that consists of two anti-parallel arranged heterodimers, each one formed by a 17 kDa (p17) and a 12 kDa (p12) subunit.

It localises to the cytoplasm. The enzyme catalyses Strict requirement for an Asp residue at positions P1 and P4. It has a preferred cleavage sequence of Asp-Xaa-Xaa-Asp-|- with a hydrophobic amino-acid residue at P2 and a hydrophilic amino-acid residue at P3, although Val or Ala are also accepted at this position.. Its function is as follows. Important mediator of apoptosis. At the onset of apoptosis, it proteolytically cleaves poly(ADP-ribose) polymerase PARP1 at a '216-Asp-|-Gly-217' bond. This Xenopus laevis (African clawed frog) protein is Caspase-3 (casp3).